The chain runs to 547 residues: Alpha-humulene/(-)-(E)-beta-caryophyllene synthase (547 aa).

The (2E,6E)-farnesyl diphosphate site is built by arginine 262, aspartate 299, aspartate 303, arginine 442, and aspartate 445. Residues aspartate 299 and aspartate 303 each coordinate Mg(2+). The short motif at 299–303 (DDMYD) is the DDXXD motif element. Mg(2+)-binding residues include aspartate 445, aspartate 446, serine 449, and glutamate 453.

It belongs to the terpene synthase family. Tpsa subfamily. As to quaternary structure, monomer. Mg(2+) serves as cofactor. Mn(2+) is required as a cofactor. In terms of tissue distribution, expressed exclusively in flowers. Expressed in the flower stigmata and also detected in the mesocarp cell layers of the silique wall.

It is found in the cytoplasm. The enzyme catalyses (2E,6E)-farnesyl diphosphate = (-)-(E)-beta-caryophyllene + diphosphate. The catalysed reaction is (2E,6E)-farnesyl diphosphate = alpha-copaene + diphosphate. It carries out the reaction (2E,6E)-farnesyl diphosphate = alpha-humulene + diphosphate. It catalyses the reaction (2E,6E)-farnesyl diphosphate = (1S,2S,4R)-beta-elemene + diphosphate. It participates in secondary metabolite biosynthesis; terpenoid biosynthesis. In terms of biological role, involved in sesquiterpene (C15) biosynthesis. The major products are beta-caryophyllene and alpha-humulene. Does not convert geranyl diphosphate (GPP) to any monoterpenes. This Arabidopsis thaliana (Mouse-ear cress) protein is Alpha-humulene/(-)-(E)-beta-caryophyllene synthase.